A 327-amino-acid polypeptide reads, in one-letter code: MSHTLRVIFAGTPEFAAAALAAIHEAGFPVPLVLTQPDRPAGRGMKLQASPVKRYAQEHGIEVAQPPSLRRNGKYPAQATAAIEQLRATPHDVMVVAAYGLLLPQEVLDIAPHGCINIHASLLPRWRGAAPIHRAIEAGDAETGITLMQMDAGLDTGAMISEVRTAIAGTDTTATLHDRLAEAGAKLIVDALVELERSGKLASIPQPAAGATYAEKIAKHEAALDWRRPAAELARQVRAFDPFPGGAATLDGAVLKLWSAAAVDASCKAEPGTIVEVSPEGVVVACGDGALRITQLQKPGGKRLPVRDFLAGSTLAAGQRFELAQPQ.

121 to 124 is a binding site for (6S)-5,6,7,8-tetrahydrofolate; that stretch reads SLLP.

This sequence belongs to the Fmt family.

The enzyme catalyses L-methionyl-tRNA(fMet) + (6R)-10-formyltetrahydrofolate = N-formyl-L-methionyl-tRNA(fMet) + (6S)-5,6,7,8-tetrahydrofolate + H(+). In terms of biological role, attaches a formyl group to the free amino group of methionyl-tRNA(fMet). The formyl group appears to play a dual role in the initiator identity of N-formylmethionyl-tRNA by promoting its recognition by IF2 and preventing the misappropriation of this tRNA by the elongation apparatus. This is Methionyl-tRNA formyltransferase from Paraburkholderia phymatum (strain DSM 17167 / CIP 108236 / LMG 21445 / STM815) (Burkholderia phymatum).